A 316-amino-acid chain; its full sequence is BTB/POZ domain-containing protein Y57A10B.3 (316 aa).

An N-terminal signal peptide occupies residues 1–21 (MSAMRRCTCFIICLLTSYTYG). 6 N-linked (GlcNAc...) asparagine glycosylation sites follow: Asn-91, Asn-107, Asn-118, Asn-133, Asn-191, and Asn-260. One can recognise a BTB domain in the interval 158–226 (RDAVLIVEGK…VHSTATFPND (69 aa)).

The protein resides in the secreted. This Caenorhabditis elegans protein is BTB/POZ domain-containing protein Y57A10B.3 (btb-14).